A 485-amino-acid chain; its full sequence is Regulatory protein ViaA (485 aa).

This sequence belongs to the ViaA family. In terms of assembly, homodimer. Interacts with RavA.

The protein resides in the cytoplasm. In terms of biological role, component of the RavA-ViaA chaperone complex, which may act on the membrane to optimize the function of some of the respiratory chains. ViaA stimulates the ATPase activity of RavA. The polypeptide is Regulatory protein ViaA (Photorhabdus laumondii subsp. laumondii (strain DSM 15139 / CIP 105565 / TT01) (Photorhabdus luminescens subsp. laumondii)).